The primary structure comprises 35 residues: Photosystem II reaction center protein M (35 aa).

The helical transmembrane segment at I5–L25 threads the bilayer.

Belongs to the PsbM family. In terms of assembly, PSII is composed of 1 copy each of membrane proteins PsbA, PsbB, PsbC, PsbD, PsbE, PsbF, PsbH, PsbI, PsbJ, PsbK, PsbL, PsbM, PsbT, PsbX, PsbY, PsbZ, Psb30/Ycf12, at least 3 peripheral proteins of the oxygen-evolving complex and a large number of cofactors. It forms dimeric complexes.

The protein localises to the plastid. Its subcellular location is the chloroplast thylakoid membrane. Functionally, one of the components of the core complex of photosystem II (PSII). PSII is a light-driven water:plastoquinone oxidoreductase that uses light energy to abstract electrons from H(2)O, generating O(2) and a proton gradient subsequently used for ATP formation. It consists of a core antenna complex that captures photons, and an electron transfer chain that converts photonic excitation into a charge separation. This subunit is found at the monomer-monomer interface. This is Photosystem II reaction center protein M from Staurastrum punctulatum (Green alga).